We begin with the raw amino-acid sequence, 318 residues long: Methionyl-tRNA formyltransferase (318 aa).

120-123 contacts (6S)-5,6,7,8-tetrahydrofolate; the sequence is SLLP.

It belongs to the Fmt family.

It carries out the reaction L-methionyl-tRNA(fMet) + (6R)-10-formyltetrahydrofolate = N-formyl-L-methionyl-tRNA(fMet) + (6S)-5,6,7,8-tetrahydrofolate + H(+). Attaches a formyl group to the free amino group of methionyl-tRNA(fMet). The formyl group appears to play a dual role in the initiator identity of N-formylmethionyl-tRNA by promoting its recognition by IF2 and preventing the misappropriation of this tRNA by the elongation apparatus. The chain is Methionyl-tRNA formyltransferase from Variovorax paradoxus (strain S110).